A 236-amino-acid polypeptide reads, in one-letter code: tRNA (guanine-N(7)-)-methyltransferase (236 aa).

Residues aspartate 35, glutamate 60, asparagine 87, and aspartate 113 each coordinate S-adenosyl-L-methionine. The active site involves aspartate 113. Substrate-binding residues include lysine 117 and aspartate 149.

This sequence belongs to the class I-like SAM-binding methyltransferase superfamily. TrmB family.

The enzyme catalyses guanosine(46) in tRNA + S-adenosyl-L-methionine = N(7)-methylguanosine(46) in tRNA + S-adenosyl-L-homocysteine. Its pathway is tRNA modification; N(7)-methylguanine-tRNA biosynthesis. Functionally, catalyzes the formation of N(7)-methylguanine at position 46 (m7G46) in tRNA. The sequence is that of tRNA (guanine-N(7)-)-methyltransferase from Prochlorococcus marinus (strain MIT 9313).